We begin with the raw amino-acid sequence, 603 residues long: Myotubularin (603 aa).

The span at 1–13 (MASASTSKYNSHS) shows a compositional bias: polar residues. Residues 1–25 (MASASTSKYNSHSLENESIKRTSRD) are disordered. Phosphoserine occurs at positions 13 and 18. Over residues 14–25 (LENESIKRTSRD) the composition is skewed to basic and acidic residues. Residues 29-97 (RDLTEAVPRL…GVISRIEKMG (69 aa)) form the GRAM domain. Residues 163–538 (GWTVYNPVEE…RHLELWVNYY (376 aa)) enclose the Myotubularin phosphatase domain. 3 residues coordinate a 1,2-diacyl-sn-glycero-3-phospho-(1D-myo-inositol-3,5-bisphosphate): Asn-288, Asn-313, and Ile-314. A 1,2-diacyl-sn-glycero-3-phospho-(1D-myo-inositol-3-phosphate)-binding residues include Asn-288, Asn-313, and Ile-314. Catalysis depends on Cys-375, which acts as the Phosphocysteine intermediate. Residues Ser-376, Asp-377, Gly-378, Trp-379, Asp-380, Arg-381, Lys-417, and Arg-421 each coordinate a 1,2-diacyl-sn-glycero-3-phospho-(1D-myo-inositol-3,5-bisphosphate). 6 residues coordinate a 1,2-diacyl-sn-glycero-3-phospho-(1D-myo-inositol-3-phosphate): Ser-376, Asp-377, Gly-378, Trp-379, Asp-380, and Arg-381. Arg-421 serves as a coordination point for a 1,2-diacyl-sn-glycero-3-phospho-(1D-myo-inositol-3-phosphate). A Phosphothreonine modification is found at Thr-495. Positions 579-603 (SAKLSDPPTSPSSPSQMMPHVQTHF) are disordered. Ser-588 is subject to Phosphoserine.

The protein belongs to the protein-tyrosine phosphatase family. Non-receptor class myotubularin subfamily. In terms of assembly, heterodimer with MTMR12. Interacts with KMT2A/MLL1 (via SET domain). Interacts with DES in skeletal muscle but not in cardiac muscle. Interacts with SPEG.

The protein localises to the cytoplasm. The protein resides in the cell membrane. It localises to the cell projection. Its subcellular location is the filopodium. It is found in the ruffle. The protein localises to the late endosome. The protein resides in the myofibril. It localises to the sarcomere. The catalysed reaction is a 1,2-diacyl-sn-glycero-3-phospho-(1D-myo-inositol-3-phosphate) + H2O = a 1,2-diacyl-sn-glycero-3-phospho-(1D-myo-inositol) + phosphate. It carries out the reaction a 1,2-diacyl-sn-glycero-3-phospho-(1D-myo-inositol-3,5-bisphosphate) + H2O = a 1,2-diacyl-sn-glycero-3-phospho-(1D-myo-inositol-5-phosphate) + phosphate. The enzyme catalyses 1,2-dioctanoyl-sn-glycero-3-phospho-(1-D-myo-inositol-3-phosphate) + H2O = 1,2-dioctanoyl-sn-glycero-3-phospho-(1D-myo-inositol) + phosphate. It catalyses the reaction 1,2-dioctanoyl-sn-glycero-3-phospho-(1D-myo-inositol-3,5-bisphosphate) + H2O = 1,2-dioctanoyl-sn-glycero-3-phospho-(1D-myo-inositol-5-phosphate) + phosphate. The catalysed reaction is 1,2-dihexadecanoyl-sn-glycero-3-phospho-(1D-myo-inositol-3,5-phosphate) + H2O = 1,2-dihexadecanoyl-sn-glycero-3-phospho-(1D-myo-inositol-5-phosphate) + phosphate. Its activity is regulated as follows. Allosterically activated by phosphatidylinositol 5-phosphate (PI5P). Its function is as follows. Lipid phosphatase which dephosphorylates phosphatidylinositol 3-monophosphate (PI3P) and phosphatidylinositol 3,5-bisphosphate (PI(3,5)P2). Has also been shown to dephosphorylate phosphotyrosine- and phosphoserine-containing peptides. Negatively regulates EGFR degradation through regulation of EGFR trafficking from the late endosome to the lysosome. Plays a role in vacuolar formation and morphology. Regulates desmin intermediate filament assembly and architecture. Plays a role in mitochondrial morphology and positioning. Required for skeletal muscle maintenance but not for myogenesis. In skeletal muscles, stabilizes MTMR12 protein levels. The sequence is that of Myotubularin from Pongo abelii (Sumatran orangutan).